A 44-amino-acid polypeptide reads, in one-letter code: Thymosin beta-12 (44 aa).

Composition is skewed to basic and acidic residues over residues methionine 1–glutamate 25 and glutamate 33–serine 44. The disordered stretch occupies residues methionine 1–serine 44. At serine 2 the chain carries N-acetylserine.

This sequence belongs to the thymosin beta family.

The protein localises to the cytoplasm. Its subcellular location is the cytoskeleton. In terms of biological role, plays an important role in the organization of the cytoskeleton. Binds to and sequesters actin monomers (G actin) and therefore inhibits actin polymerization. This chain is Thymosin beta-12, found in Lateolabrax japonicus (Japanese sea perch).